Consider the following 145-residue polypeptide: Plastocyanin, chloroplastic (145 aa).

The transit peptide at 1–47 directs the protein to the chloroplast; sequence MKATLRAPASRASAVRPVASLKAAAQRVASVAGVSVASLALTLAAHA. The 98-residue stretch at 48–145 folds into the Plastocyanin-like domain; the sequence is DATVKLGADS…AGMVGKIIVQ (98 aa). Residues histidine 85, cysteine 130, histidine 133, and methionine 138 each contribute to the Cu cation site.

This sequence belongs to the plastocyanin family. It depends on Cu(2+) as a cofactor.

It is found in the plastid. The protein resides in the chloroplast thylakoid membrane. Functionally, participates in electron transfer between P700 and the cytochrome b6-f complex in photosystem I. This Chlamydomonas reinhardtii (Chlamydomonas smithii) protein is Plastocyanin, chloroplastic (PETE).